Consider the following 593-residue polypeptide: Translation initiation factor IF-2 (593 aa).

The tr-type G domain maps to 101 to 270; it reads LRPPVVTIMG…LLIAELEDLR (170 aa). The G1 stretch occupies residues 110-117; that stretch reads GHVDHGKT. A GTP-binding site is contributed by 110 to 117; that stretch reads GHVDHGKT. The segment at 135–139 is G2; the sequence is GITQH. Residues 156–159 are G3; sequence DTPG. GTP is bound by residues 156–160 and 210–213; these read DTPGH and NKMD. The tract at residues 210–213 is G4; that stretch reads NKMD. A G5 region spans residues 246 to 248; that stretch reads SAR.

The protein belongs to the TRAFAC class translation factor GTPase superfamily. Classic translation factor GTPase family. IF-2 subfamily.

It is found in the cytoplasm. In terms of biological role, one of the essential components for the initiation of protein synthesis. Protects formylmethionyl-tRNA from spontaneous hydrolysis and promotes its binding to the 30S ribosomal subunits. Also involved in the hydrolysis of GTP during the formation of the 70S ribosomal complex. The chain is Translation initiation factor IF-2 from Dehalococcoides mccartyi (strain CBDB1).